A 105-amino-acid chain; its full sequence is Large ribosomal subunit protein uL24 (105 aa).

The protein belongs to the universal ribosomal protein uL24 family. Part of the 50S ribosomal subunit.

In terms of biological role, one of two assembly initiator proteins, it binds directly to the 5'-end of the 23S rRNA, where it nucleates assembly of the 50S subunit. Its function is as follows. One of the proteins that surrounds the polypeptide exit tunnel on the outside of the subunit. The protein is Large ribosomal subunit protein uL24 of Xylella fastidiosa (strain 9a5c).